We begin with the raw amino-acid sequence, 417 residues long: Phosphoglycerate kinase 1 (417 aa).

The residue at position 2 (serine 2) is an N-acetylserine. Phosphoserine is present on residues serine 2 and serine 4. At lysine 6 the chain carries N6-succinyllysine. At lysine 11 the chain carries N6-acetyllysine. Positions 23, 24, 25, 26, 38, 39, 62, 63, 65, and 66 each coordinate (2R)-3-phosphoglycerate. The interval 38-43 is mitochondrial targeting region exposed following cis-trans isomerization by PIN1 and recognized by the TOM complex for mitochondrial translocation of the protein; that stretch reads QRIKAA. Lysine 75 is subject to N6-acetyllysine. Tyrosine 76 is modified (phosphotyrosine). 2 positions are modified to N6-acetyllysine: lysine 86 and lysine 91. N6-(2-hydroxyisobutyryl)lysine; alternate is present on lysine 97. An N6-acetyllysine; alternate modification is found at lysine 97. The (2R)-3-phosphoglycerate site is built by leucine 122 and arginine 123. Lysine 131 is subject to N6-acetyllysine; alternate. Lysine 131 bears the N6-malonyllysine; alternate mark. Lysine 146 is modified (N6-acetyllysine). Histidine 170 and arginine 171 together coordinate (2R)-3-phosphoglycerate. N6-succinyllysine is present on lysine 191. Residue tyrosine 196 is modified to Phosphotyrosine. At lysine 199 the chain carries N6-acetyllysine. A Phosphoserine modification is found at serine 203. Residue glycine 214 coordinates ADP. Glycine 214 is a CDP binding site. Alanine 215 and lysine 216 together coordinate AMP. Alanine 215 provides a ligand contact to ATP. Alanine 215 provides a ligand contact to Mg(2+). At lysine 216 the chain carries N6-(2-hydroxyisobutyryl)lysine. Mg(2+) contacts are provided by alanine 218 and aspartate 219. Aspartate 219 serves as a coordination point for CDP. Lysine 220 is a binding site for AMP. Lysine 220 is an ATP binding site. Lysine 220 is subject to N6-(2-hydroxyisobutyryl)lysine. Residue glycine 238 participates in ADP binding. Glycine 238 is a binding site for CDP. Glycine 239 contacts AMP. ATP is bound at residue glycine 239. N6-acetyllysine is present on residues lysine 267 and lysine 291. Glycine 313 is a binding site for AMP. Glycine 313 serves as a coordination point for ATP. Lysine 323 carries the post-translational modification N6-(2-hydroxyisobutyryl)lysine. CDP is bound by residues glycine 338, valine 340, and phenylalanine 343. Phenylalanine 343 lines the ADP pocket. Glutamate 344 is a binding site for AMP. ATP is bound by residues glutamate 344, aspartate 375, and threonine 376. A Mg(2+)-binding site is contributed by aspartate 375.

The protein belongs to the phosphoglycerate kinase family. As to quaternary structure, monomer. Interacts with kinase MAPK1/ERK2; the interaction is direct, occurs under hypoxic conditions, and promotes its interaction with PIN1. Interacts with peptidyl-prolyl cis-trans isomerase PIN1; the interaction is direct, occurs under hypoxic conditions, and targets the protein to the mitochondrion by promoting interactions with the TOM complex. Interacts with mitochondrial circRNA mcPGK1 (via its 2nd stem-loop); the interaction is direct and targets the protein to the mitochondrion by promoting interactions with the TOM complex. Interacts with pyruvate dehydrogenase kinase PDK1; the interaction is direct, occurs under hypoxic conditions and leads to PDK1-mediated inhibition of pyruvate dehydrogenase complex activity. Requires Mg(2+) as cofactor. Post-translationally, phosphorylated at Ser-203 by MAPK1/ERK2 under hypoxic conditions, which promotes its mitochondrial targeting.

Its subcellular location is the cytoplasm. It localises to the cytosol. The protein resides in the mitochondrion matrix. The enzyme catalyses (2R)-3-phosphoglycerate + ATP = (2R)-3-phospho-glyceroyl phosphate + ADP. It catalyses the reaction L-seryl-[protein] + ATP = O-phospho-L-seryl-[protein] + ADP + H(+). It participates in carbohydrate degradation; glycolysis; pyruvate from D-glyceraldehyde 3-phosphate: step 2/5. Its function is as follows. Catalyzes one of the two ATP producing reactions in the glycolytic pathway via the reversible conversion of 1,3-diphosphoglycerate to 3-phosphoglycerate. Both L- and D- forms of purine and pyrimidine nucleotides can be used as substrates, but the activity is much lower on pyrimidines. In addition to its role as a glycolytic enzyme, it seems that PGK-1 acts as a polymerase alpha cofactor protein (primer recognition protein). Acts as a protein kinase when localized to the mitochondrion where it phosphorylates pyruvate dehydrogenase kinase PDK1 to inhibit pyruvate dehydrogenase complex activity and suppress the formation of acetyl-coenzyme A from pyruvate, and consequently inhibit oxidative phosphorylation and promote glycolysis. May play a role in sperm motility. This chain is Phosphoglycerate kinase 1 (PGK1), found in Notamacropus eugenii (Tammar wallaby).